A 312-amino-acid chain; its full sequence is DNA-directed RNA polymerase subunit alpha (312 aa).

Positions M1 to S226 are alpha N-terminal domain (alpha-NTD). The alpha C-terminal domain (alpha-CTD) stretch occupies residues T243–K312.

Belongs to the RNA polymerase alpha chain family. As to quaternary structure, homodimer. The RNAP catalytic core consists of 2 alpha, 1 beta, 1 beta' and 1 omega subunit. When a sigma factor is associated with the core the holoenzyme is formed, which can initiate transcription.

It carries out the reaction RNA(n) + a ribonucleoside 5'-triphosphate = RNA(n+1) + diphosphate. Its function is as follows. DNA-dependent RNA polymerase catalyzes the transcription of DNA into RNA using the four ribonucleoside triphosphates as substrates. The sequence is that of DNA-directed RNA polymerase subunit alpha from Lactococcus lactis subsp. cremoris (strain SK11).